The following is a 571-amino-acid chain: Proline--tRNA ligase (571 aa).

It belongs to the class-II aminoacyl-tRNA synthetase family. ProS type 1 subfamily. As to quaternary structure, homodimer.

It is found in the cytoplasm. The catalysed reaction is tRNA(Pro) + L-proline + ATP = L-prolyl-tRNA(Pro) + AMP + diphosphate. Catalyzes the attachment of proline to tRNA(Pro) in a two-step reaction: proline is first activated by ATP to form Pro-AMP and then transferred to the acceptor end of tRNA(Pro). As ProRS can inadvertently accommodate and process non-cognate amino acids such as alanine and cysteine, to avoid such errors it has two additional distinct editing activities against alanine. One activity is designated as 'pretransfer' editing and involves the tRNA(Pro)-independent hydrolysis of activated Ala-AMP. The other activity is designated 'posttransfer' editing and involves deacylation of mischarged Ala-tRNA(Pro). The misacylated Cys-tRNA(Pro) is not edited by ProRS. In Syntrophotalea carbinolica (strain DSM 2380 / NBRC 103641 / GraBd1) (Pelobacter carbinolicus), this protein is Proline--tRNA ligase.